The chain runs to 490 residues: Ribulose bisphosphate carboxylase large chain (490 aa).

N127 and T177 together coordinate substrate. The Proton acceptor role is filled by K179. A substrate-binding site is contributed by K181. Residues K205, D207, and E208 each coordinate Mg(2+). K205 bears the N6-carboxylysine mark. H297 serves as the catalytic Proton acceptor. R298, H330, and S382 together coordinate substrate.

The protein belongs to the RuBisCO large chain family. Type I subfamily. As to quaternary structure, heterohexadecamer of 8 large chains and 8 small chains. Requires Mg(2+) as cofactor.

It is found in the plastid. The protein resides in the chloroplast. It catalyses the reaction 2 (2R)-3-phosphoglycerate + 2 H(+) = D-ribulose 1,5-bisphosphate + CO2 + H2O. The enzyme catalyses D-ribulose 1,5-bisphosphate + O2 = 2-phosphoglycolate + (2R)-3-phosphoglycerate + 2 H(+). In terms of biological role, ruBisCO catalyzes two reactions: the carboxylation of D-ribulose 1,5-bisphosphate, the primary event in carbon dioxide fixation, as well as the oxidative fragmentation of the pentose substrate in the photorespiration process. Both reactions occur simultaneously and in competition at the same active site. The chain is Ribulose bisphosphate carboxylase large chain from Trieres chinensis (Marine centric diatom).